Consider the following 119-residue polypeptide: Beta-2-microglobulin (119 aa).

Residues 1-20 (MAPFVAIALLVLLSLSGLEA) form the signal peptide. One can recognise an Ig-like C1-type domain in the interval 25-114 (PKIQVYSRHP…VTFSTPKTVK (90 aa)). Cys45 and Cys100 are disulfide-bonded.

This sequence belongs to the beta-2-microglobulin family. As to quaternary structure, heterodimer of an alpha chain and a beta chain. Beta-2-microglobulin is the beta-chain of major histocompatibility complex class I molecules.

The protein resides in the secreted. Functionally, component of the class I major histocompatibility complex (MHC). Involved in the presentation of peptide antigens to the immune system. This chain is Beta-2-microglobulin (B2M), found in Cheracebus torquatus (Collared titi monkey).